The following is an 81-amino-acid chain: Photosystem I iron-sulfur center (81 aa).

4Fe-4S ferredoxin-type domains follow at residues 2–31 and 39–68; these read AHSVKIYDTCIGCTQCVRACPTDVLEMVPW and IASAPRTEDCVGCKRCESACPTDYLSVRVY. Residues Cys11, Cys14, Cys17, Cys21, Cys48, Cys51, Cys54, and Cys58 each contribute to the [4Fe-4S] cluster site.

As to quaternary structure, the eukaryotic PSI reaction center is composed of at least 11 subunits. The cofactor is [4Fe-4S] cluster.

It localises to the plastid. It is found in the chloroplast thylakoid membrane. It carries out the reaction reduced [plastocyanin] + hnu + oxidized [2Fe-2S]-[ferredoxin] = oxidized [plastocyanin] + reduced [2Fe-2S]-[ferredoxin]. Apoprotein for the two 4Fe-4S centers FA and FB of photosystem I (PSI); essential for photochemical activity. FB is the terminal electron acceptor of PSI, donating electrons to ferredoxin. The C-terminus interacts with PsaA/B/D and helps assemble the protein into the PSI complex. Required for binding of PsaD and PsaE to PSI. PSI is a plastocyanin-ferredoxin oxidoreductase, converting photonic excitation into a charge separation, which transfers an electron from the donor P700 chlorophyll pair to the spectroscopically characterized acceptors A0, A1, FX, FA and FB in turn. This chain is Photosystem I iron-sulfur center, found in Gnetum gnemon (Spanish joint-fir).